The sequence spans 309 residues: Taste receptor type 2 member 31 (309 aa).

The Extracellular segment spans residues 1–2; it reads MT. The chain crosses the membrane as a helical span at residues 3–23; it reads TFIPIIFSSLVMVMFVTGNFA. At 24 to 55 the chain is on the cytoplasmic side; that stretch reads NGFIALVNSIESVKRQKISYADQILTALAVSR. Residues 56–76 form a helical membrane-spanning segment; that stretch reads IGLLWVLLLNWYSTVLNPAFY. Residues 77–100 lie on the Extracellular side of the membrane; the sequence is SVEVRTTAYNVWAVTGHFSNWLAT. The helical transmembrane segment at 101–121 threads the bilayer; sequence SLSIFYLLKIANFSNLIFLHL. The Cytoplasmic segment spans residues 122-126; sequence KRRVK. The helical transmembrane segment at 127 to 147 threads the bilayer; it reads SVILVMLLGPLLFLACQLFVI. Residues 148 to 181 are Extracellular-facing; sequence NMKEIVQTKEYEGNXTWKIKLRSAVYLSDATVTT. N-linked (GlcNAc...) asparagine glycosylation is present at asparagine 161. A helical transmembrane segment spans residues 182–202; it reads LGNLVPFTLTLLCFLLLICSL. The Cytoplasmic segment spans residues 203–229; the sequence is CKHLKKMQLHGKGSQDPSMKVHIKALQ. The helical transmembrane segment at 230-250 threads the bilayer; sequence TVTSFLLLCAIYFLSIMISVW. The Extracellular portion of the chain corresponds to 251-259; the sequence is SLGSLKNKP. A helical transmembrane segment spans residues 260–280; it reads VFMFCKAMRFSYPSIHPFILI. Topologically, residues 281-309 are cytoplasmic; it reads WGNKKLKQTFLSVLQQVRYWVKGEKPSSP.

It belongs to the G-protein coupled receptor T2R family.

It localises to the membrane. Functionally, receptor that may play a role in the perception of bitterness and is gustducin-linked. May play a role in sensing the chemical composition of the gastrointestinal content. The activity of this receptor may stimulate alpha gustducin, mediate PLC-beta-2 activation and lead to the gating of TRPM5. This is Taste receptor type 2 member 31 (TAS2R31) from Gorilla gorilla gorilla (Western lowland gorilla).